Here is a 478-residue protein sequence, read N- to C-terminus: H(+)/Cl(-) exchange transporter ClcA (478 aa).

Residues 1–32 (MTHSTQQLSPEGVAEGKRGRLIRELVNRDKTP) lie on the Cytoplasmic side of the membrane. Residues 33 to 69 (LIILIMAAVVGVVTGLLGVAFDRGVDWVQQQRLLALA) form a helical membrane-spanning segment. The Periplasmic segment spans residues 70 to 76 (NVADSAL). The helical transmembrane segment at 77–100 (LVWPLAFIMSALLAMMGYFLVSRF) threads the bilayer. The Selectivity filter part_1 signature appears at 106–110 (GSGIP). Serine 107 contacts chloride. Residues 109 to 116 (IPEIEGAM) constitute an intramembrane region (helical). The Cytoplasmic portion of the chain corresponds to 117-123 (EEMRPVR). 2 consecutive transmembrane segments (helical) span residues 124-141 (WWRV…TLGA) and 148-166 (EGPM…VDIF). Residues 146 to 150 (GREGP) carry the Selectivity filter part_2 motif. Over 167–176 (RLRSPEARHS) the chain is Cytoplasmic. 2 consecutive intramembrane regions (helical) follow at residues 177–189 (LLAT…LSAA) and 193–201 (PLAGILFVI). Residues 202–214 (EEMRSQFRYSLVS) are Cytoplasmic-facing. Residues 215–232 (IKAVFIGVITSTIVYRYF) form a helical membrane-spanning segment. Residues 233–252 (NGERAIIEVGKLSDAPLNTL) lie on the Periplasmic side of the membrane. Residues 253–281 (WLYLLLGIIFGAVGVIFNALIFRTQDMFV) traverse the membrane as a helical segment. Topologically, residues 282–287 (RFHGGD) are cytoplasmic. A helical membrane pass occupies residues 288-309 (WRKLVLIGGLLGGMCGLLALLH). Residues 310–329 (GNAVGGGFALIPIAAAGNFS) lie on the Periplasmic side of the membrane. 2 helical membrane-spanning segments follow: residues 330-349 (IGML…LCFG) and 355-376 (GIFA…LSCA). Positions 355-359 (GIFAP) match the Selectivity filter part_3 motif. Chloride contacts are provided by isoleucine 356 and phenylalanine 357. Residues 377 to 386 (HFFPQYGIEA) lie on the Periplasmic side of the membrane. Positions 387 to 401 (GTFAIAGMGALFAAS) form an intramembrane region, helical. Positions 402-404 (VRA) form an intramembrane region, note=Loop between two helices. Residues 405 to 416 (PLTGIVLVLEMT) constitute an intramembrane region (helical). An intramembrane region (note=Loop between two helices) is located at residues 417–421 (DNYQL). A helical membrane pass occupies residues 422–438 (ILPMIVTCLGATLIAQF). Residues 439-478 (MGGKPLYSAILARTLAKQEQARATVIAQEPAVENTPQTGR) are Cytoplasmic-facing. Residue tyrosine 445 participates in chloride binding.

The protein belongs to the chloride channel (TC 2.A.49) family. ClcA subfamily. Homodimer.

It is found in the cell inner membrane. The enzyme catalyses 2 chloride(in) + H(+)(out) = 2 chloride(out) + H(+)(in). Its function is as follows. Proton-coupled chloride transporter. Functions as antiport system and exchanges two chloride ions for 1 proton. Probably acts as an electrical shunt for an outwardly-directed proton pump that is linked to amino acid decarboxylation, as part of the extreme acid resistance (XAR) response. In Yersinia pseudotuberculosis serotype IB (strain PB1/+), this protein is H(+)/Cl(-) exchange transporter ClcA.